Here is a 139-residue protein sequence, read N- to C-terminus: Proline-rich protein 13 (139 aa).

The tract at residues 1–139 (MWNPSAGPNP…SSSSSSSDSD (139 aa)) is disordered. 2 stretches are compositionally biased toward pro residues: residues 24–62 (ACPP…PQPG) and 70–91 (GPYP…PPAP). The segment covering 103-124 (KTRKKMKKAHKKSHKHHKHGKH) has biased composition (basic residues). The span at 125–139 (SSSSSSSSSSSSDSD) shows a compositional bias: low complexity.

Its subcellular location is the nucleus. In terms of biological role, negatively regulates TSP1 expression at the level of transcription. This down-regulation was shown to reduce taxane-induced apoptosis. In Rattus norvegicus (Rat), this protein is Proline-rich protein 13 (Prr13).